The primary structure comprises 902 residues: Cytosolic carboxypeptidase 2 (902 aa).

A Peptidase M14 domain is found at 396-666 (YPYTYTDLQC…HVCDTLLDFC (271 aa)). Zn(2+) is bound by residues His462, Glu465, and His558. Glu630 acts as the Proton donor/acceptor in catalysis. A compositionally biased stretch (basic residues) spans 746-758 (FKKKKKKSLQTRK). 2 disordered regions span residues 746–770 (FKKK…KNLM) and 796–879 (FKNS…PRSR). Residues 853–866 (VSCSPKRTINSSQE) show a composition bias toward polar residues.

The protein belongs to the peptidase M14 family. Interacts with RARRES1, KIF11 AND MAPRE1. Requires Zn(2+) as cofactor.

The protein localises to the cytoplasm. It localises to the cytosol. The protein resides in the cytoskeleton. Its subcellular location is the microtubule organizing center. It is found in the centrosome. The protein localises to the centriole. It localises to the cilium basal body. It catalyses the reaction (L-glutamyl)(n+1)-gamma-L-glutamyl-L-glutamyl-[protein] + H2O = (L-glutamyl)(n)-gamma-L-glutamyl-L-glutamyl-[protein] + L-glutamate. Inhibited by RARRES1. Functionally, metallocarboxypeptidase that mediates deglutamylation of tubulin and non-tubulin target proteins. Catalyzes the removal of polyglutamate side chains present on the gamma-carboxyl group of glutamate residues within the C-terminal tail of tubulin protein. Specifically cleaves tubulin long-side-chains, while it is not able to remove the branching point glutamate. Also catalyzes the removal of polyglutamate residues from the carboxy-terminus of non-tubulin proteins such as MYLK. This is Cytosolic carboxypeptidase 2 from Homo sapiens (Human).